The chain runs to 99 residues: Phosphoribosyl-ATP pyrophosphatase (99 aa).

This sequence belongs to the PRA-PH family.

The protein resides in the cytoplasm. The enzyme catalyses 1-(5-phospho-beta-D-ribosyl)-ATP + H2O = 1-(5-phospho-beta-D-ribosyl)-5'-AMP + diphosphate + H(+). It functions in the pathway amino-acid biosynthesis; L-histidine biosynthesis; L-histidine from 5-phospho-alpha-D-ribose 1-diphosphate: step 2/9. The chain is Phosphoribosyl-ATP pyrophosphatase from Methanosphaerula palustris (strain ATCC BAA-1556 / DSM 19958 / E1-9c).